The sequence spans 291 residues: ATP synthase gamma chain (291 aa).

Belongs to the ATPase gamma chain family. In terms of assembly, F-type ATPases have 2 components, CF(1) - the catalytic core - and CF(0) - the membrane proton channel. CF(1) has five subunits: alpha(3), beta(3), gamma(1), delta(1), epsilon(1). CF(0) has three main subunits: a, b and c.

Its subcellular location is the cell inner membrane. Produces ATP from ADP in the presence of a proton gradient across the membrane. The gamma chain is believed to be important in regulating ATPase activity and the flow of protons through the CF(0) complex. In Verminephrobacter eiseniae (strain EF01-2), this protein is ATP synthase gamma chain.